The following is a 423-amino-acid chain: Histidine--tRNA ligase (423 aa).

This sequence belongs to the class-II aminoacyl-tRNA synthetase family. In terms of assembly, homodimer.

The protein resides in the cytoplasm. It catalyses the reaction tRNA(His) + L-histidine + ATP = L-histidyl-tRNA(His) + AMP + diphosphate + H(+). This chain is Histidine--tRNA ligase, found in Staphylococcus haemolyticus (strain JCSC1435).